Here is a 160-residue protein sequence, read N- to C-terminus: Probable transcriptional regulator YgiV (160 aa).

Represses expression of mcbR. The chain is Probable transcriptional regulator YgiV (ygiV) from Escherichia coli (strain K12).